A 95-amino-acid polypeptide reads, in one-letter code: Aspartyl/glutamyl-tRNA(Asn/Gln) amidotransferase subunit C (95 aa).

The protein belongs to the GatC family. In terms of assembly, heterotrimer of A, B and C subunits.

It carries out the reaction L-glutamyl-tRNA(Gln) + L-glutamine + ATP + H2O = L-glutaminyl-tRNA(Gln) + L-glutamate + ADP + phosphate + H(+). The enzyme catalyses L-aspartyl-tRNA(Asn) + L-glutamine + ATP + H2O = L-asparaginyl-tRNA(Asn) + L-glutamate + ADP + phosphate + 2 H(+). Its function is as follows. Allows the formation of correctly charged Asn-tRNA(Asn) or Gln-tRNA(Gln) through the transamidation of misacylated Asp-tRNA(Asn) or Glu-tRNA(Gln) in organisms which lack either or both of asparaginyl-tRNA or glutaminyl-tRNA synthetases. The reaction takes place in the presence of glutamine and ATP through an activated phospho-Asp-tRNA(Asn) or phospho-Glu-tRNA(Gln). In Chromobacterium violaceum (strain ATCC 12472 / DSM 30191 / JCM 1249 / CCUG 213 / NBRC 12614 / NCIMB 9131 / NCTC 9757 / MK), this protein is Aspartyl/glutamyl-tRNA(Asn/Gln) amidotransferase subunit C.